Consider the following 256-residue polypeptide: MARTIIAGNWKMNHGPRETREFVAGMKEKYQTPPAVETVICPPFVSISDLVNESPEWLKTGAQNVYFEESGAFTGEVSPKMLAELGVEYVIIGHSERRNIFAESDEEVNKKVRIALKYGIKPIICVGESDAQRNEGKTLEVVENQVKSALSEVVSDTLQNVVFAYEPVWAIGSGKAATGEDAEQVCKHIRSVISELNSSVADDIPVLYGGSVKPENLEEFMDQDNINGALVGGKSLVAETYCQLLEVARRFPGDEG.

9-11 is a binding site for substrate; that stretch reads NWK. His-94 acts as the Electrophile in catalysis. The active-site Proton acceptor is the Glu-166. Substrate-binding positions include Gly-172, Ser-211, and 232 to 233; that span reads GG.

It belongs to the triosephosphate isomerase family. In terms of assembly, homodimer.

It localises to the cytoplasm. The enzyme catalyses D-glyceraldehyde 3-phosphate = dihydroxyacetone phosphate. Its pathway is carbohydrate biosynthesis; gluconeogenesis. The protein operates within carbohydrate degradation; glycolysis; D-glyceraldehyde 3-phosphate from glycerone phosphate: step 1/1. In terms of biological role, involved in the gluconeogenesis. Catalyzes stereospecifically the conversion of dihydroxyacetone phosphate (DHAP) to D-glyceraldehyde-3-phosphate (G3P). This Natranaerobius thermophilus (strain ATCC BAA-1301 / DSM 18059 / JW/NM-WN-LF) protein is Triosephosphate isomerase.